We begin with the raw amino-acid sequence, 615 residues long: DNA mismatch repair protein MutL (615 aa).

The segment at 362-397 (HFAEPAVREPVAPRYSPAPASGSRPAASWPNAQPGY) is disordered. Positions 373–391 (APRYSPAPASGSRPAASWP) are enriched in low complexity.

Belongs to the DNA mismatch repair MutL/HexB family.

In terms of biological role, this protein is involved in the repair of mismatches in DNA. It is required for dam-dependent methyl-directed DNA mismatch repair. May act as a 'molecular matchmaker', a protein that promotes the formation of a stable complex between two or more DNA-binding proteins in an ATP-dependent manner without itself being part of a final effector complex. In Escherichia coli O45:K1 (strain S88 / ExPEC), this protein is DNA mismatch repair protein MutL.